Reading from the N-terminus, the 142-residue chain is MAKKIDGYIKLQVPAGKANPSPPIGPALGQRGVNIMAFCKEFNAATQKVEPGLPIPVVITVYNDKSFTFIMKTPPASILLKKAAGIQKGSSVPNKTKVGKLTRAQLEEIATTKEPDLTGADLDARVRTIAGSARSMGLEVEL.

Belongs to the universal ribosomal protein uL11 family. Part of the ribosomal stalk of the 50S ribosomal subunit. Interacts with L10 and the large rRNA to form the base of the stalk. L10 forms an elongated spine to which L12 dimers bind in a sequential fashion forming a multimeric L10(L12)X complex. In terms of processing, one or more lysine residues are methylated.

In terms of biological role, forms part of the ribosomal stalk which helps the ribosome interact with GTP-bound translation factors. This Acinetobacter baumannii (strain AB307-0294) protein is Large ribosomal subunit protein uL11.